The sequence spans 455 residues: Chromosomal replication initiator protein DnaA (455 aa).

Residues 1–73 (MTISPQYIWN…LEEVETIVGY (73 aa)) form a domain I, interacts with DnaA modulators region. The domain II stretch occupies residues 73–114 (YPIAVKLTTSQEQNLRIVDKNKDNLSSTKLQNKRQQESPKLN). The domain III, AAA+ region stretch occupies residues 115-331 (QLNPRYNFSR…GALIRAVTYI (217 aa)). Residues Gly159, Gly161, Lys162, and Thr163 each contribute to the ATP site. The interval 332–455 (SISGLSMTVE…RINIASRNQN (124 aa)) is domain IV, binds dsDNA.

This sequence belongs to the DnaA family. In terms of assembly, oligomerizes as a right-handed, spiral filament on DNA at oriC.

Its subcellular location is the cytoplasm. Its function is as follows. Plays an essential role in the initiation and regulation of chromosomal replication. ATP-DnaA binds to the origin of replication (oriC) to initiate formation of the DNA replication initiation complex once per cell cycle. Binds the DnaA box (a 9 base pair repeat at the origin) and separates the double-stranded (ds)DNA. Forms a right-handed helical filament on oriC DNA; dsDNA binds to the exterior of the filament while single-stranded (ss)DNA is stabiized in the filament's interior. The ATP-DnaA-oriC complex binds and stabilizes one strand of the AT-rich DNA unwinding element (DUE), permitting loading of DNA polymerase. After initiation quickly degrades to an ADP-DnaA complex that is not apt for DNA replication. Binds acidic phospholipids. In Crocosphaera subtropica (strain ATCC 51142 / BH68) (Cyanothece sp. (strain ATCC 51142)), this protein is Chromosomal replication initiator protein DnaA.